The chain runs to 368 residues: MVINTTDPEERVINLSFVLGFIKEIFGLIWIRIYILIPILGVLIGLLVIVWLERKISAGIQQRIGPEYAGPLGILQALADGIKLLLKEDIIPSRGDLWLFSIGPAIVVIPILSSYLVIPFGRHIVLADLSIGVFFRIAVSSIAPLGLLMAGYGSNNKYSFSGGLRAAAQSISYEIPLALCVLSISLLSNSLGTVDIVEAQSRYGFWGWNLWRQPIGFIAFFISSLAECERLPFDLPEAEEELVAGYQTEYSGIKFGLFYVASYLNLLASSLFVTILYLGGWNFSIPSIPISEYFEWDSINGTSEVLGITMGILITLAKAYLFLFISITARWTLPRMRIDQLLDLGWKFLLPIALGNLLLTASFQLLLL.

Transmembrane regions (helical) follow at residues 11-31 (RVINLSFVLGFIKEIFGLIWI), 33-53 (IYILIPILGVLIGLLVIVWLE), 98-118 (WLFSIGPAIVVIPILSSYLVI), 131-151 (IGVFFRIAVSSIAPLGLLMAG), 177-197 (LALCVLSISLLSNSLGTVDIV), 205-225 (FWGWNLWRQPIGFIAFFISSL), 255-275 (FGLFYVASYLNLLASSLFVTI), 305-325 (VLGITMGILITLAKAYLFLFI), and 348-368 (FLLPIALGNLLLTASFQLLLL).

This sequence belongs to the complex I subunit 1 family. As to quaternary structure, NDH is composed of at least 16 different subunits, 5 of which are encoded in the nucleus.

The protein localises to the plastid. Its subcellular location is the chloroplast thylakoid membrane. The enzyme catalyses a plastoquinone + NADH + (n+1) H(+)(in) = a plastoquinol + NAD(+) + n H(+)(out). It catalyses the reaction a plastoquinone + NADPH + (n+1) H(+)(in) = a plastoquinol + NADP(+) + n H(+)(out). Functionally, NDH shuttles electrons from NAD(P)H:plastoquinone, via FMN and iron-sulfur (Fe-S) centers, to quinones in the photosynthetic chain and possibly in a chloroplast respiratory chain. The immediate electron acceptor for the enzyme in this species is believed to be plastoquinone. Couples the redox reaction to proton translocation, and thus conserves the redox energy in a proton gradient. In Cycas taitungensis (Prince sago), this protein is NAD(P)H-quinone oxidoreductase subunit 1, chloroplastic.